The chain runs to 206 residues: Ribosomal RNA small subunit methyltransferase G (206 aa).

Residues Gly-74, Leu-79, 125 to 126, and Arg-140 each bind S-adenosyl-L-methionine; that span reads VE.

Belongs to the methyltransferase superfamily. RNA methyltransferase RsmG family.

It is found in the cytoplasm. The enzyme catalyses guanosine(527) in 16S rRNA + S-adenosyl-L-methionine = N(7)-methylguanosine(527) in 16S rRNA + S-adenosyl-L-homocysteine. Functionally, specifically methylates the N7 position of guanine in position 527 of 16S rRNA. The polypeptide is Ribosomal RNA small subunit methyltransferase G (Shewanella sp. (strain MR-7)).